The chain runs to 375 residues: Non-structural protein NS5 (375 aa).

The protein is Non-structural protein NS5 (NS-5) of Rottboellia (Sorghum).